The following is a 150-amino-acid chain: UPF0756 membrane protein CGSHiEE_06715 (150 aa).

4 helical membrane-spanning segments follow: residues 1-21, 52-72, 81-101, and 123-143; these read MTLQ…LGVL, YGVK…LVSG, GFVS…AWLA, and IIGV…AGIL.

This sequence belongs to the UPF0756 family.

It localises to the cell membrane. The sequence is that of UPF0756 membrane protein CGSHiEE_06715 from Haemophilus influenzae (strain PittEE).